The chain runs to 599 residues: Elongation factor 4 (599 aa).

The 183-residue stretch at 5 to 187 folds into the tr-type G domain; that stretch reads SHIRNFSIIA…HLVRVIPPPQ (183 aa). Residues 17 to 22 and 134 to 137 contribute to the GTP site; these read DHGKST and NKMD.

It belongs to the TRAFAC class translation factor GTPase superfamily. Classic translation factor GTPase family. LepA subfamily.

It localises to the cell inner membrane. The catalysed reaction is GTP + H2O = GDP + phosphate + H(+). In terms of biological role, required for accurate and efficient protein synthesis under certain stress conditions. May act as a fidelity factor of the translation reaction, by catalyzing a one-codon backward translocation of tRNAs on improperly translocated ribosomes. Back-translocation proceeds from a post-translocation (POST) complex to a pre-translocation (PRE) complex, thus giving elongation factor G a second chance to translocate the tRNAs correctly. Binds to ribosomes in a GTP-dependent manner. The chain is Elongation factor 4 from Azotobacter vinelandii (strain DJ / ATCC BAA-1303).